A 216-amino-acid polypeptide reads, in one-letter code: Large ribosomal subunit protein bL25 (216 aa).

A disordered region spans residues 184–216 (VPPTSDVEEEEGDEDLEEDVEETAAEEEEGVEE). A compositionally biased stretch (acidic residues) spans 189 to 216 (DVEEEEGDEDLEEDVEETAAEEEEGVEE).

Belongs to the bacterial ribosomal protein bL25 family. CTC subfamily. As to quaternary structure, part of the 50S ribosomal subunit; part of the 5S rRNA/L5/L18/L25 subcomplex. Contacts the 5S rRNA. Binds to the 5S rRNA independently of L5 and L18.

Functionally, this is one of the proteins that binds to the 5S RNA in the ribosome where it forms part of the central protuberance. This Desulforapulum autotrophicum (strain ATCC 43914 / DSM 3382 / VKM B-1955 / HRM2) (Desulfobacterium autotrophicum) protein is Large ribosomal subunit protein bL25.